A 214-amino-acid polypeptide reads, in one-letter code: ATP synthase subunit a (214 aa).

A run of 6 helical transmembrane segments spans residues 9-29 (LDGM…VFMI), 64-84 (IMMV…TYGI), 88-108 (LWVN…SGYI), 121-141 (SGAP…SIMI), 150-170 (LVAN…VLSS), and 182-202 (LIMV…AYIF).

Belongs to the ATPase A chain family. As to quaternary structure, F-type ATPases have 2 components, CF(1) - the catalytic core - and CF(0) - the membrane proton channel. CF(1) has five subunits: alpha(3), beta(3), gamma(1), delta(1), epsilon(1). CF(0) has three main subunits: a, b and c.

The protein resides in the mitochondrion inner membrane. Mitochondrial membrane ATP synthase (F(1)F(0) ATP synthase or Complex V) produces ATP from ADP in the presence of a proton gradient across the membrane which is generated by electron transport complexes of the respiratory chain. F-type ATPases consist of two structural domains, F(1) - containing the extramembraneous catalytic core and F(0) - containing the membrane proton channel, linked together by a central stalk and a peripheral stalk. During catalysis, ATP synthesis in the catalytic domain of F(1) is coupled via a rotary mechanism of the central stalk subunits to proton translocation. Key component of the proton channel; it may play a direct role in the translocation of protons across the membrane. This Albinaria caerulea (Land snail) protein is ATP synthase subunit a (ATP6).